Consider the following 263-residue polypeptide: Endonuclease 8 (263 aa).

Catalysis depends on Pro-2, which acts as the Schiff-base intermediate with DNA. Catalysis depends on Glu-3, which acts as the Proton donor. Residue Lys-53 is the Proton donor; for beta-elimination activity of the active site. The DNA site is built by Gln-70, Arg-125, and Asn-169. The segment at 229-263 (KVFHRDGEPCERCGSIIEKTTLSSRPFYWCPGCQH) adopts an FPG-type zinc-finger fold. The Proton donor; for delta-elimination activity role is filled by Arg-253.

It belongs to the FPG family. Zn(2+) is required as a cofactor.

It catalyses the reaction 2'-deoxyribonucleotide-(2'-deoxyribose 5'-phosphate)-2'-deoxyribonucleotide-DNA = a 3'-end 2'-deoxyribonucleotide-(2,3-dehydro-2,3-deoxyribose 5'-phosphate)-DNA + a 5'-end 5'-phospho-2'-deoxyribonucleoside-DNA + H(+). In terms of biological role, involved in base excision repair of DNA damaged by oxidation or by mutagenic agents. Acts as a DNA glycosylase that recognizes and removes damaged bases. Has a preference for oxidized pyrimidines, such as thymine glycol, 5,6-dihydrouracil and 5,6-dihydrothymine. Has AP (apurinic/apyrimidinic) lyase activity and introduces nicks in the DNA strand. Cleaves the DNA backbone by beta-delta elimination to generate a single-strand break at the site of the removed base with both 3'- and 5'-phosphates. The protein is Endonuclease 8 of Escherichia coli O9:H4 (strain HS).